The primary structure comprises 398 residues: Signal-regulatory protein beta-1 (398 aa).

Residues 1-29 (MPVPASWPHLPSPFLLMTLLLGRLTGVAG) form the signal peptide. The 107-residue stretch at 30-136 (EDELQVIQPE…SPDDVEFKSG (107 aa)) folds into the Ig-like V-type domain. At 30 to 371 (EDELQVIQPE…EAALAPTAPL (342 aa)) the chain is on the extracellular side. Disulfide bonds link Cys-54–Cys-120 and Cys-169–Cys-227. Ig-like C1-type domains are found at residues 147–246 (PSAP…ANLS) and 253–347 (PTLE…YALE). N-linked (GlcNAc...) asparagine glycosylation is found at Asn-244, Asn-269, and Asn-291. A helical transmembrane segment spans residues 372–392 (LVALLLGPKLLLVVGVSAIYI). Residues 393 to 398 (CWKQKA) lie on the Cytoplasmic side of the membrane.

As to quaternary structure, homodimer; disulfide-linked. Interacts with TYROBP. This interaction results in the recruitment of SYK. In terms of processing, N-glycosylated. As to expression, detected in monocytes and dendritic cells.

The protein resides in the cell membrane. Immunoglobulin-like cell surface receptor involved in the negative regulation of receptor tyrosine kinase-coupled signaling processes. Also participates in the recruitment of tyrosine kinase SYK. Triggers activation of myeloid cells when associated with TYROBP. The sequence is that of Signal-regulatory protein beta-1 (SIRPB1) from Homo sapiens (Human).